A 631-amino-acid chain; its full sequence is MLYHENFDVIVVGGGHAGTEAALASARTGQKTLLLTHNIDTLGQMSCNPAIGGIGKGHLVKEVDAMGGLMAEAIDHAGIQFRTLNASKGPAVRATRAQADRALYKAYVRNALENAPNLTLFQQSVDDLIVDQDRVVGVVTQMGLKFQAKAVVLTVGTFLGGKIHIGMESSSGGRAGDPPSIALADRLRELPFRVDRLKTGTPPRIDARSVDFSVLEAQHGDNPTPVFSFMGKREHQPRQIPCFITHTNEKTHDVIRNNLDRSPMYAGVIEGIGPRYCPSIEDKVMRFADKNSHQIFIEPEGLTTHELYPNGISTSLPFDVQVQIVRSMKGFENAHIVRPGYAIEYDFFDPRDLKQTYETKFISGLFFAGQINGTTGYEEAAAQGLMAGLNASLHSQGKEGWSPRRDQAYMGVLIDDLSTMGTKEPYRMFTSRAEYRLLLREDNADLRLTEKARELGLIDDARWARFNEKIENMETERQRLKSTWMNPNSAGIDELNKLLKTPMAREASGEDLLRRPEISYSDLTQLDAFAPALEDQQASEQVEIQVKYDGYIKRQQEEIEKSLRHEHTKLPADLDYKDVKGLSNEVVAKLTEAKPESIGIASRISGITPAAISILLVHLKKHGLLKKGEEE.

Residues 13-18 (GGGHAG), Val-125, and Ser-180 each bind FAD. 273–287 (GPRYCPSIEDKVMRF) lines the NAD(+) pocket. Gln-370 contributes to the FAD binding site.

This sequence belongs to the MnmG family. Homodimer. Heterotetramer of two MnmE and two MnmG subunits. The cofactor is FAD.

The protein resides in the cytoplasm. Its function is as follows. NAD-binding protein involved in the addition of a carboxymethylaminomethyl (cmnm) group at the wobble position (U34) of certain tRNAs, forming tRNA-cmnm(5)s(2)U34. The sequence is that of tRNA uridine 5-carboxymethylaminomethyl modification enzyme MnmG from Vibrio campbellii (strain ATCC BAA-1116).